The sequence spans 2368 residues: Serine/threonine-protein kinase MEC1 (2368 aa).

Positions 1399 to 1944 (LLAQRSLETD…LWYITALVNS (546 aa)) constitute an FAT domain. A PI3K/PI4K catalytic domain is found at 2049 to 2352 (FGSSYKVFSS…QTETLIQEAT (304 aa)). A G-loop region spans residues 2055 to 2061 (VFSSLKK). Positions 2140–2368 (SILSTKYESL…KMYIGWLPFW (229 aa)) are binding to the RPA complex. Residues 2221 to 2229 (GLGDRHCEN) are catalytic loop. Residues 2241 to 2265 (HVDFDCLFEKGKRLPVPEIVPFRLT) form an activation loop region. Residues 2336–2368 (LVLSVAGQTETLIQEATSEDNLSKMYIGWLPFW) enclose the FATC domain.

This sequence belongs to the PI3/PI4-kinase family. ATM subfamily. In terms of assembly, interacts with LCD1, which is required for localization MEC1 to the RPA complex. Interacts directly with the RPA subunits RFA1 and RFA2.

It is found in the nucleus. It catalyses the reaction L-seryl-[protein] + ATP = O-phospho-L-seryl-[protein] + ADP + H(+). It carries out the reaction L-threonyl-[protein] + ATP = O-phospho-L-threonyl-[protein] + ADP + H(+). Its function is as follows. Serine/threonine protein kinase which activates checkpoint signaling upon genotoxic stresses such as ionizing radiation (IR), ultraviolet light (UV), or DNA replication stalling, thereby acting as a DNA damage sensor. Recognizes the substrate consensus sequence [ST]-Q. Recruited in complex with protein LCD1 by the single-strand-binding protein complex RPA to DNA lesions in order to initiate the DNA repair by homologous recombination, after the MRX-complex and TEL1 are displaced. Phosphorylates LCD1 and RPA2, a subunit of RPA, involved in DNA replication, repair and recombination. Phosphorylates RAD9, CHK1 and RAD53, which leads to the activation of the CHK1 and RAD53 kinases involved in DNA damage repair cascade. Phosphorylates histone H2A to form H2AS128ph (gamma-H2A) at sites of DNA damage, also involved in the regulation of DNA damage response mechanism. Also phosphorylates SLX4 and RTT107 which are proteins involved in genome stability. Required for cell growth and meiotic recombination. In Saccharomyces cerevisiae (strain ATCC 204508 / S288c) (Baker's yeast), this protein is Serine/threonine-protein kinase MEC1 (MEC1).